The chain runs to 558 residues: Phosphatidylserine lipase ABHD16A (558 aa).

The next 2 helical transmembrane spans lie at 60–80 (ILAL…FAFF) and 93–113 (VVPF…VACL). The Cytoplasmic segment spans residues 114–558 (RGIGRWTNPQ…AQNFQMPWHL (445 aa)). Positions 281–407 (LVICCEGNAG…LVTRTVRQHL (127 aa)) constitute an AB hydrolase-1 domain. Catalysis depends on charge relay system residues serine 355, aspartate 430, and histidine 507.

The protein belongs to the AB hydrolase superfamily. ABHD16 family.

It is found in the membrane. It catalyses the reaction 1-heptadecanoyl-2-(5Z,8Z,11Z,14Z-eicosatetraenoyl)-sn-glycero-3-phosphoserine + H2O = 1-heptadecanoyl-sn-glycero-3-phosphoserine + (5Z,8Z,11Z,14Z)-eicosatetraenoate + H(+). The enzyme catalyses 1-hexadecanoyl-2-(9Z-octadecenoyl)-sn-glycero-3-phospho-L-serine + H2O = 1-hexadecanoyl-sn-glycero-3-phospho-L-serine + (9Z)-octadecenoate + H(+). The catalysed reaction is 1-octadecanoyl-2-(9Z,12Z-octadecadienoyl)-sn-glycero-3-phosphoserine + H2O = 1-octadecanoyl-sn-glycero-3-phosphoserine + (9Z,12Z)-octadecadienoate + H(+). It carries out the reaction 1-heptadecanoyl-2-(5Z,8Z,11Z,14Z-eicosatetraenoyl)-sn-glycero-3-phosphocholine + H2O = 1-heptadecanoyl-sn-glycero-3-phosphocholine + (5Z,8Z,11Z,14Z)-eicosatetraenoate + H(+). It catalyses the reaction 1-hexadecanoyl-2-(9Z-octadecenoyl)-sn-glycero-3-phosphoglycerol + H2O = 1-hexadecanoyl-sn-glycero-3-phosphoglycerol + (9Z)-octadecenoate + H(+). The enzyme catalyses 1-hexadecanoyl-2-(9Z-octadecenoyl)-sn-glycero-3-phospho-(1D-myo-inositol) + H2O = 1-hexadecanoyl-sn-glycero-3-phospho-(1D-myo-inositol) + (9Z)-octadecenoate + H(+). The catalysed reaction is 1-heptadecanoyl-2-(5Z,8Z,11Z,14Z-eicosatetraenoyl)-sn-glycero-3-phosphoethanolamine + H2O = 1-heptadecanoyl-sn-glycero-3-phosphoethanolamine + (5Z,8Z,11Z,14Z)-eicosatetraenoate + H(+). It carries out the reaction 1-hexadecanoyl-2-(9Z-octadecenoyl)-sn-glycero-3-phospho-(1'-sn-glycerol) + H2O = 1-hexadecanoyl-sn-glycero-3-phospho-(1'-sn-glycerol) + (9Z)-octadecenoate + H(+). It catalyses the reaction Hydrolyzes glycerol monoesters of long-chain fatty acids.. The enzyme catalyses 1-tetradecanoylglycerol + H2O = tetradecanoate + glycerol + H(+). The catalysed reaction is 2-hexadecanoylglycerol + H2O = glycerol + hexadecanoate + H(+). It carries out the reaction 1-(9Z-octadecenoyl)-glycerol + H2O = glycerol + (9Z)-octadecenoate + H(+). It catalyses the reaction 2-(9Z-octadecenoyl)-glycerol + H2O = glycerol + (9Z)-octadecenoate + H(+). The enzyme catalyses 2-(9Z,12Z-octadecadienoyl)-glycerol + H2O = (9Z,12Z)-octadecadienoate + glycerol + H(+). The catalysed reaction is 1-(5Z,8Z,11Z,14Z-eicosatetraenoyl)-glycerol + H2O = glycerol + (5Z,8Z,11Z,14Z)-eicosatetraenoate + H(+). It carries out the reaction 2-(5Z,8Z,11Z,14Z-eicosatetraenoyl)-glycerol + H2O = glycerol + (5Z,8Z,11Z,14Z)-eicosatetraenoate + H(+). It catalyses the reaction prostaglandin D2-1-glycerol ester + H2O = prostaglandin D2 + glycerol + H(+). The enzyme catalyses 2-glyceryl-15-deoxy-Delta(12,14)-prostaglandin J2 + H2O = 15-deoxy-Delta(12,14)-prostaglandin J2 + glycerol + H(+). The catalysed reaction is 1-(9Z,12Z-octadecadienoyl)-glycerol + H2O = (9Z,12Z)-octadecadienoate + glycerol + H(+). Functionally, phosphatidylserine (PS) lipase that mediates the hydrolysis of phosphatidylserine to generate lysophosphatidylserine (LPS). LPS constitutes a class of signaling lipids that regulates immunological and neurological processes. Has no activity towards diacylglycerol, triacylglycerol or lysophosphatidylserine lipase. Also has monoacylglycerol lipase activity, with preference for 1-(9Z,12Z-octadecadienoyl)-glycerol (1-LG) and 2-glyceryl-15-deoxy-Delta(12,14)-prostaglandin J2 (15d-PGJ(2)-G). The sequence is that of Phosphatidylserine lipase ABHD16A from Bos taurus (Bovine).